Reading from the N-terminus, the 131-residue chain is Large ribosomal subunit protein bL19c (131 aa).

Belongs to the bacterial ribosomal protein bL19 family.

It is found in the plastid. The protein localises to the cyanelle. This protein is located at the 30S-50S ribosomal subunit interface and may play a role in the structure and function of the aminoacyl-tRNA binding site. This Cyanophora paradoxa protein is Large ribosomal subunit protein bL19c (rpl19).